The chain runs to 420 residues: Meiotically up-regulated gene 137 protein (420 aa).

Residues 10–232 (NEKPLGDQRA…QNSLTPQKKI (223 aa)) enclose the BAR domain. The SH3 domain occupies 279 to 345 (KETVFVKAIY…PVNYCTRIYD (67 aa)). A disordered region spans residues 398 to 420 (SQNVEASSQPIKIRKPLPEIPNK).

It is found in the cytoplasm. Its subcellular location is the nucleus. Has a role in meiosis and sporulation. This is Meiotically up-regulated gene 137 protein (mug137) from Schizosaccharomyces pombe (strain 972 / ATCC 24843) (Fission yeast).